The chain runs to 43 residues: Protein PsbN (43 aa).

A helical membrane pass occupies residues 4–24 (GILVVIFISCLLVSFTGYTIY).

This sequence belongs to the PsbN family.

It localises to the plastid. The protein localises to the chloroplast thylakoid membrane. May play a role in photosystem I and II biogenesis. In Chaetosphaeridium globosum (Charophycean green alga), this protein is Protein PsbN.